The following is a 91-amino-acid chain: Small ribosomal subunit protein bS20 (91 aa).

Positions 1 to 21 (MPLHKSAEKRLRQAARRNERN) are enriched in basic and acidic residues. The interval 1-24 (MPLHKSAEKRLRQAARRNERNRAR) is disordered.

It belongs to the bacterial ribosomal protein bS20 family.

Functionally, binds directly to 16S ribosomal RNA. This Chlorobaculum parvum (strain DSM 263 / NCIMB 8327) (Chlorobium vibrioforme subsp. thiosulfatophilum) protein is Small ribosomal subunit protein bS20.